The sequence spans 296 residues: Phosphatidylglycerol--prolipoprotein diacylglyceryl transferase (296 aa).

The next 4 helical transmembrane spans lie at 10–30, 57–77, 92–112, and 119–139; these read IAFSLGPVKVHWYGLMYLAAF, LLFYGMLGVVLGGRIGYMLFY, VWEGGMSFHGGLLGVLVACWL, and LHFFDVMDFVAPLVPLGLGFG. R140 contributes to the a 1,2-diacyl-sn-glycero-3-phospho-(1'-sn-glycerol) binding site. The next 3 membrane-spanning stretches (helical) occupy residues 194-214, 220-240, and 254-274; these read QLYEAALEGVVMFVVLWTFSM, YALSGLFALLYGVFRFIVEFV, and WLTMGQILSLPLIAVGLALLA.

This sequence belongs to the Lgt family.

Its subcellular location is the cell inner membrane. It carries out the reaction L-cysteinyl-[prolipoprotein] + a 1,2-diacyl-sn-glycero-3-phospho-(1'-sn-glycerol) = an S-1,2-diacyl-sn-glyceryl-L-cysteinyl-[prolipoprotein] + sn-glycerol 1-phosphate + H(+). The protein operates within protein modification; lipoprotein biosynthesis (diacylglyceryl transfer). Catalyzes the transfer of the diacylglyceryl group from phosphatidylglycerol to the sulfhydryl group of the N-terminal cysteine of a prolipoprotein, the first step in the formation of mature lipoproteins. The protein is Phosphatidylglycerol--prolipoprotein diacylglyceryl transferase of Xanthomonas oryzae pv. oryzae (strain MAFF 311018).